A 390-amino-acid chain; its full sequence is Chorismate synthase (390 aa).

Residues Arg48 and Arg54 each contribute to the NADP(+) site. FMN-binding positions include 125–127 (RSS), 238–239 (NA), Gly278, 293–297 (KPTSS), and Arg319. Residues 360-390 (KVPGNIINPTNPVTTQPDVRRAEDPEPDENS) are disordered. Residues 366–376 (INPTNPVTTQP) are compositionally biased toward polar residues.

The protein belongs to the chorismate synthase family. In terms of assembly, homotetramer. Requires FMNH2 as cofactor.

The enzyme catalyses 5-O-(1-carboxyvinyl)-3-phosphoshikimate = chorismate + phosphate. Its pathway is metabolic intermediate biosynthesis; chorismate biosynthesis; chorismate from D-erythrose 4-phosphate and phosphoenolpyruvate: step 7/7. Functionally, catalyzes the anti-1,4-elimination of the C-3 phosphate and the C-6 proR hydrogen from 5-enolpyruvylshikimate-3-phosphate (EPSP) to yield chorismate, which is the branch point compound that serves as the starting substrate for the three terminal pathways of aromatic amino acid biosynthesis. This reaction introduces a second double bond into the aromatic ring system. This Nitrosomonas eutropha (strain DSM 101675 / C91 / Nm57) protein is Chorismate synthase.